The following is a 154-amino-acid chain: uncharacterized protein (154 aa).

An N-terminal signal peptide occupies residues 1–21; that stretch reads MSISSGSFAQPAAVVSSPGVT.

It belongs to the ivy family.

It localises to the periplasm. This is an uncharacterized protein from Yersinia pestis.